The primary structure comprises 107 residues: U1-lycotoxin-Ls1v (107 aa).

An N-terminal signal peptide occupies residues 1–20; it reads MMKVLVVVALLVTLISYSSS. Residues 21 to 41 constitute a propeptide that is removed on maturation; it reads EGIDDLEADELLSLTANEQTR. 4 disulfides stabilise this stretch: Cys-44/Cys-59, Cys-51/Cys-68, Cys-58/Cys-86, and Cys-70/Cys-84.

This sequence belongs to the neurotoxin 19 (CSTX) family. 04 (U1-Lctx) subfamily. As to expression, expressed by the venom gland.

The protein localises to the secreted. This is U1-lycotoxin-Ls1v from Lycosa singoriensis (Wolf spider).